Here is a 65-residue protein sequence, read N- to C-terminus: ATP synthase F(0) complex subunit 8 (65 aa).

A helical membrane pass occupies residues 8 to 24 (TWLTTILSMFLALFIIF). K53 bears the N6-acetyllysine; alternate mark. K53 carries the N6-succinyllysine; alternate modification. K56 is subject to N6-acetyllysine.

This sequence belongs to the ATPase protein 8 family. As to quaternary structure, component of the ATP synthase complex composed at least of ATP5F1A/subunit alpha, ATP5F1B/subunit beta, ATP5MC1/subunit c (homooctomer), MT-ATP6/subunit a, MT-ATP8/subunit 8, ATP5ME/subunit e, ATP5MF/subunit f, ATP5MG/subunit g, ATP5MK/subunit k, ATP5MJ/subunit j, ATP5F1C/subunit gamma, ATP5F1D/subunit delta, ATP5F1E/subunit epsilon, ATP5PF/subunit F6, ATP5PB/subunit b, ATP5PD/subunit d, ATP5PO/subunit OSCP. ATP synthase complex consists of a soluble F(1) head domain (subunits alpha(3) and beta(3)) - the catalytic core - and a membrane F(0) domain - the membrane proton channel (subunits c, a, 8, e, f, g, k and j). These two domains are linked by a central stalk (subunits gamma, delta, and epsilon) rotating inside the F1 region and a stationary peripheral stalk (subunits F6, b, d, and OSCP). Interacts with PRICKLE3.

It is found in the mitochondrion membrane. Its function is as follows. Subunit 8, of the mitochondrial membrane ATP synthase complex (F(1)F(0) ATP synthase or Complex V) that produces ATP from ADP in the presence of a proton gradient across the membrane which is generated by electron transport complexes of the respiratory chain. ATP synthase complex consist of a soluble F(1) head domain - the catalytic core - and a membrane F(1) domain - the membrane proton channel. These two domains are linked by a central stalk rotating inside the F(1) region and a stationary peripheral stalk. During catalysis, ATP synthesis in the catalytic domain of F(1) is coupled via a rotary mechanism of the central stalk subunits to proton translocation. In vivo, can only synthesize ATP although its ATP hydrolase activity can be activated artificially in vitro. Part of the complex F(0) domain. The polypeptide is ATP synthase F(0) complex subunit 8 (Capra ibex ibex (Alpine ibex)).